A 354-amino-acid chain; its full sequence is MHVTVSEILERFQPEGLITNHIGPDSVITRVAPIEDCAPGDLVFIDKPKYVGDVLQRKPAAVLTTPAIAAEFGESPALAVLIAPNVRLAIALIKQAYADRDVRDTEWPRIHPSAVIHASVEVPADAIIGPGVVIGADVVLGRGVVLMANVVIERGARIGAETVLHPGVTVCIDCEIGAGCILKPGCVIGSEGFGFAQDAQRRNYRIPHTGKVIIEDRVVIGANTTIDRATYGATVVRSGTIIDALVHLGHNVEIGEDCILCAHTGLSGSTRFGKRVIATGQTGTIDHITVADDSVLLHRAGLNTSIKQPGMYAGGPAQPLQQYLKNMAVMPRLHEIWSRLKKLEKAVAQLGSAE.

Histidine 250 (proton acceptor) is an active-site residue.

The protein belongs to the transferase hexapeptide repeat family. LpxD subfamily. As to quaternary structure, homotrimer.

The catalysed reaction is a UDP-3-O-[(3R)-3-hydroxyacyl]-alpha-D-glucosamine + a (3R)-hydroxyacyl-[ACP] = a UDP-2-N,3-O-bis[(3R)-3-hydroxyacyl]-alpha-D-glucosamine + holo-[ACP] + H(+). Its pathway is bacterial outer membrane biogenesis; LPS lipid A biosynthesis. In terms of biological role, catalyzes the N-acylation of UDP-3-O-acylglucosamine using 3-hydroxyacyl-ACP as the acyl donor. Is involved in the biosynthesis of lipid A, a phosphorylated glycolipid that anchors the lipopolysaccharide to the outer membrane of the cell. The chain is UDP-3-O-acylglucosamine N-acyltransferase from Methylococcus capsulatus (strain ATCC 33009 / NCIMB 11132 / Bath).